The following is a 217-amino-acid chain: Probable transaldolase (217 aa).

Lysine 83 (schiff-base intermediate with substrate) is an active-site residue.

It belongs to the transaldolase family. Type 3B subfamily.

The protein resides in the cytoplasm. It carries out the reaction D-sedoheptulose 7-phosphate + D-glyceraldehyde 3-phosphate = D-erythrose 4-phosphate + beta-D-fructose 6-phosphate. It participates in carbohydrate degradation; pentose phosphate pathway; D-glyceraldehyde 3-phosphate and beta-D-fructose 6-phosphate from D-ribose 5-phosphate and D-xylulose 5-phosphate (non-oxidative stage): step 2/3. Transaldolase is important for the balance of metabolites in the pentose-phosphate pathway. In Bartonella tribocorum (strain CIP 105476 / IBS 506), this protein is Probable transaldolase.